A 301-amino-acid chain; its full sequence is Lipoyl synthase (301 aa).

The [4Fe-4S] cluster site is built by Cys-53, Cys-58, Cys-64, Cys-79, Cys-83, Cys-86, and Ser-290. One can recognise a Radical SAM core domain in the interval 65 to 279 (WSRKTATYML…RIYGKSIGFK (215 aa)).

It belongs to the radical SAM superfamily. Lipoyl synthase family. [4Fe-4S] cluster is required as a cofactor.

It is found in the cytoplasm. It carries out the reaction [[Fe-S] cluster scaffold protein carrying a second [4Fe-4S](2+) cluster] + N(6)-octanoyl-L-lysyl-[protein] + 2 oxidized [2Fe-2S]-[ferredoxin] + 2 S-adenosyl-L-methionine + 4 H(+) = [[Fe-S] cluster scaffold protein] + N(6)-[(R)-dihydrolipoyl]-L-lysyl-[protein] + 4 Fe(3+) + 2 hydrogen sulfide + 2 5'-deoxyadenosine + 2 L-methionine + 2 reduced [2Fe-2S]-[ferredoxin]. It participates in protein modification; protein lipoylation via endogenous pathway; protein N(6)-(lipoyl)lysine from octanoyl-[acyl-carrier-protein]: step 2/2. Its function is as follows. Catalyzes the radical-mediated insertion of two sulfur atoms into the C-6 and C-8 positions of the octanoyl moiety bound to the lipoyl domains of lipoate-dependent enzymes, thereby converting the octanoylated domains into lipoylated derivatives. This Leptospira interrogans serogroup Icterohaemorrhagiae serovar copenhageni (strain Fiocruz L1-130) protein is Lipoyl synthase.